Consider the following 189-residue polypeptide: MKLIVGLGNPEKRHENTRHNIGFEVIDEMARLFQTGMTTGKGNFHHAKITHRGKGVIVLKPMTYMNLSGHAVVAAMNFYKIPVEEILVICDDLNIPLGSIRLRAKGSAGGQNGLKHIIQCLGREDFARLRVGIGRDHPSGSYSSFVLGKFSEEERKTADSIIPECAEAALDFVVHGIEHAMNRFNRKNA.

His-14 contributes to the tRNA binding site. His-19 acts as the Proton acceptor in catalysis. TRNA-binding residues include Tyr-64, Asn-66, and Asn-112.

The protein belongs to the PTH family. In terms of assembly, monomer.

It localises to the cytoplasm. The catalysed reaction is an N-acyl-L-alpha-aminoacyl-tRNA + H2O = an N-acyl-L-amino acid + a tRNA + H(+). Functionally, hydrolyzes ribosome-free peptidyl-tRNAs (with 1 or more amino acids incorporated), which drop off the ribosome during protein synthesis, or as a result of ribosome stalling. Catalyzes the release of premature peptidyl moieties from peptidyl-tRNA molecules trapped in stalled 50S ribosomal subunits, and thus maintains levels of free tRNAs and 50S ribosomes. In Chlorobium phaeobacteroides (strain BS1), this protein is Peptidyl-tRNA hydrolase.